A 534-amino-acid chain; its full sequence is CTP synthase (534 aa).

The amidoligase domain stretch occupies residues 1 to 267 (MSKYIVVTGG…GSYILNRLNI (267 aa)). Ser-13 is a binding site for CTP. Position 13 (Ser-13) interacts with UTP. 14–19 (SIGKGI) is a binding site for ATP. L-glutamine is bound at residue Tyr-54. Residue Asp-71 participates in ATP binding. Mg(2+)-binding residues include Asp-71 and Glu-141. CTP is bound by residues 148–150 (DIE), 188–193 (KTKPTQ), and Lys-224. Residues 188-193 (KTKPTQ) and Lys-224 each bind UTP. The Glutamine amidotransferase type-1 domain maps to 294-532 (KIAVVGKYIE…IKAAKNKKQN (239 aa)). Gly-353 contributes to the L-glutamine binding site. The Nucleophile; for glutamine hydrolysis role is filled by Cys-380. Residues 381–384 (LGLH), Glu-403, and Arg-460 each bind L-glutamine. Residues His-505 and Glu-507 contribute to the active site.

It belongs to the CTP synthase family. In terms of assembly, homotetramer.

The enzyme catalyses UTP + L-glutamine + ATP + H2O = CTP + L-glutamate + ADP + phosphate + 2 H(+). It catalyses the reaction L-glutamine + H2O = L-glutamate + NH4(+). The catalysed reaction is UTP + NH4(+) + ATP = CTP + ADP + phosphate + 2 H(+). Its pathway is pyrimidine metabolism; CTP biosynthesis via de novo pathway; CTP from UDP: step 2/2. With respect to regulation, allosterically activated by GTP, when glutamine is the substrate; GTP has no effect on the reaction when ammonia is the substrate. The allosteric effector GTP functions by stabilizing the protein conformation that binds the tetrahedral intermediate(s) formed during glutamine hydrolysis. Inhibited by the product CTP, via allosteric rather than competitive inhibition. Catalyzes the ATP-dependent amination of UTP to CTP with either L-glutamine or ammonia as the source of nitrogen. Regulates intracellular CTP levels through interactions with the four ribonucleotide triphosphates. The protein is CTP synthase of Methanosphaera stadtmanae (strain ATCC 43021 / DSM 3091 / JCM 11832 / MCB-3).